Reading from the N-terminus, the 697-residue chain is Serine/threonine-protein kinase tousled-like 2 (697 aa).

2 disordered regions span residues 27–136 (KAPL…TAPV) and 289–315 (LAKRKPPAMGQTPPANNEQKQRKNKTN). Residues 31 to 44 (NSESSNQSLCSLGS) show a composition bias toward polar residues. Positions 46–62 (SDKELEQTPEKKQNDQR) are enriched in basic and acidic residues. Low complexity predominate over residues 111–131 (SSPQHSLSNPLPLPSQQCSPP). Coiled-coil stretches lie at residues 264-293 (AFQNLIKQQERINTQREEIERQRKMLAKRK) and 334-372 (FKLRLGHLKKEEAEIQAELERLERVRNLHIRELKRIHNE). The Protein kinase domain occupies 387 to 666 (YLLLHLLGRG…VQQLACDPYL (280 aa)). ATP-binding positions include 393 to 401 (LGRGGFSEV) and lysine 416. Aspartate 517 (proton acceptor) is an active-site residue.

It belongs to the protein kinase superfamily. Ser/Thr protein kinase family. Monomer. May form homodimers; homodimerization may enhance autophosphoylation and enzymatic activity. Heterodimer with TLK1. The cofactor is Mg(2+). Post-translationally, phosphorylated. Autophosphorylated; phosphorylation promotes the assembly of higher order oligomers and enzymatic activity.

The protein localises to the nucleus. The protein resides in the nucleoplasm. It localises to the cytoplasm. It is found in the perinuclear region. Its subcellular location is the cytoskeleton. The catalysed reaction is L-seryl-[protein] + ATP = O-phospho-L-seryl-[protein] + ADP + H(+). It carries out the reaction L-threonyl-[protein] + ATP = O-phospho-L-threonyl-[protein] + ADP + H(+). Functionally, serine/threonine-protein kinase involved in the process of chromatin assembly and probably also DNA replication, transcription, repair, and chromosome segregation. Negative regulator of amino acid starvation-induced autophagy. This Xenopus tropicalis (Western clawed frog) protein is Serine/threonine-protein kinase tousled-like 2.